The chain runs to 312 residues: Methionyl-tRNA formyltransferase (312 aa).

109–112 (SLLP) lines the (6S)-5,6,7,8-tetrahydrofolate pocket.

Belongs to the Fmt family.

The enzyme catalyses L-methionyl-tRNA(fMet) + (6R)-10-formyltetrahydrofolate = N-formyl-L-methionyl-tRNA(fMet) + (6S)-5,6,7,8-tetrahydrofolate + H(+). In terms of biological role, attaches a formyl group to the free amino group of methionyl-tRNA(fMet). The formyl group appears to play a dual role in the initiator identity of N-formylmethionyl-tRNA by promoting its recognition by IF2 and preventing the misappropriation of this tRNA by the elongation apparatus. The protein is Methionyl-tRNA formyltransferase of Listeria monocytogenes serotype 4a (strain HCC23).